A 356-amino-acid polypeptide reads, in one-letter code: Arginine kinase Lit v 2.0101 (356 aa).

One can recognise a Phosphagen kinase N-terminal domain in the interval 9-91 (KLEAGFKKLE…FDPIIEDYHV (83 aa)). 64–68 (GVGIY) is an L-arginine binding site. A Phosphagen kinase C-terminal domain is found at 119-356 (FVISTRVRCG…LELIKIEKEM (238 aa)). ATP-binding positions include 122–126 (STRVR) and His-185. Glu-225 contributes to the L-arginine binding site. Position 229 (Arg-229) interacts with ATP. L-arginine is bound at residue Cys-271. Residues 280-284 (RASVH) and 309-314 (RGTRGE) contribute to the ATP site. Glu-314 contacts L-arginine.

Belongs to the ATP:guanido phosphotransferase family. In terms of assembly, monomer. In terms of tissue distribution, muscle (at protein level).

It catalyses the reaction L-arginine + ATP = N(omega)-phospho-L-arginine + ADP + H(+). It carries out the reaction dTDP + ATP = dTTP + ADP. Its function is as follows. Catalyzes the reversible transfer of high energy ATP gamma-phosphate group to L-arginine. Has nucleoside diphosphate kinase-like activity toward dTDP. Binds and phosphorylates dTDP using ATP as a phosphate donor. Does not phosphorylate dADP, dCDP, dGDP, dTMP or thymidine. The protein is Arginine kinase Lit v 2.0101 of Penaeus vannamei (Whiteleg shrimp).